Reading from the N-terminus, the 558-residue chain is UvrABC system protein C (558 aa).

The GIY-YIG domain maps to 12–92 (LLPGVYIFYG…IFNHKPKYNV (81 aa)). The UVR domain maps to 200–235 (SETLDLIEEKMKKHAKMMDFENAAKYRDLLVKFENV).

It belongs to the UvrC family. Interacts with UvrB in an incision complex.

It is found in the cytoplasm. The UvrABC repair system catalyzes the recognition and processing of DNA lesions. UvrC both incises the 5' and 3' sides of the lesion. The N-terminal half is responsible for the 3' incision and the C-terminal half is responsible for the 5' incision. This Pseudothermotoga lettingae (strain ATCC BAA-301 / DSM 14385 / NBRC 107922 / TMO) (Thermotoga lettingae) protein is UvrABC system protein C.